Reading from the N-terminus, the 726-residue chain is Myb-like protein Z (726 aa).

4 disordered regions span residues 15 to 109, 124 to 149, 161 to 239, and 272 to 303; these read DSND…SLSN, ASPS…YHPY, HYVS…TKQQ, and LIPS…NMRS. Residues 18 to 39 show a composition bias toward low complexity; it reads DNNNNNNNNNNSNNNNNNNNNN. Over residues 45–80 the composition is skewed to polar residues; the sequence is SSATSSPTGQDSTIDRPNSPSSSIKFTYPSKNSIVT. Residues 81–108 are compositionally biased toward low complexity; sequence SPSSLQLPSPSFSSSSSSSSSSSSSSLS. Positions 124 to 147 are enriched in polar residues; that stretch reads ASPSKSSENSPTIHTSSLSPNSYH. The span at 165–177 shows a compositional bias: low complexity; sequence NNNNNNNNNNNNN. Over residues 183–209 the composition is skewed to polar residues; the sequence is SSELYNTSPSISSKTTPNGSSTNNSPF. The segment covering 221–239 has biased composition (low complexity); the sequence is NNNNNNNNDRNENNTTKQQ. A Myb-like domain is found at 329–388; the sequence is IPIATRKLWSQEECCRLLEMVFQRDPQSVTSKESELRWRSIASTLGRTVTSTRKKYMRLM. Positions 516 to 651 are enriched in low complexity; sequence KQIQQQQKQK…NNNYRSSLSP (136 aa). The segment at 516–726 is disordered; the sequence is KQIQQQQKQK…NNNNYNNYHN (211 aa). Residues 661-675 show a composition bias toward polar residues; sequence QSPQQKSNNENQQNF. Positions 709-726 are enriched in low complexity; it reads NLNNNNNNNNNNYNNYHN.

This is Myb-like protein Z (mybZ) from Dictyostelium discoideum (Social amoeba).